The primary structure comprises 224 residues: Ribose-5-phosphate isomerase A (224 aa).

Residues 26–29 (TGST), 81–84 (DGAD), and 94–97 (KGGG) each bind substrate. E103 functions as the Proton acceptor in the catalytic mechanism. K121 is a substrate binding site.

It belongs to the ribose 5-phosphate isomerase family. Homodimer.

The catalysed reaction is aldehydo-D-ribose 5-phosphate = D-ribulose 5-phosphate. It functions in the pathway carbohydrate degradation; pentose phosphate pathway; D-ribose 5-phosphate from D-ribulose 5-phosphate (non-oxidative stage): step 1/1. In terms of biological role, catalyzes the reversible conversion of ribose-5-phosphate to ribulose 5-phosphate. The protein is Ribose-5-phosphate isomerase A of Listeria monocytogenes serotype 4b (strain CLIP80459).